The following is a 102-amino-acid chain: RNA-binding protein Hfq (102 aa).

Residues 9–68 (DPFLNALRRERVPVSIYLVNGIKLQGQIESFDQFVILLKNTVSQMVYKHAISTVVPSRPV) enclose the Sm domain. The interval 64–102 (PSRPVSHHSNTPSGGTSNYHHGNNPSAPQQPQQESDDAE) is disordered. Residues 70 to 96 (HHSNTPSGGTSNYHHGNNPSAPQQPQQ) show a composition bias toward polar residues.

The protein belongs to the Hfq family. In terms of assembly, homohexamer.

In terms of biological role, RNA chaperone that binds small regulatory RNA (sRNAs) and mRNAs to facilitate mRNA translational regulation in response to envelope stress, environmental stress and changes in metabolite concentrations. Also binds with high specificity to tRNAs. The chain is RNA-binding protein Hfq from Serratia proteamaculans (strain 568).